A 284-amino-acid polypeptide reads, in one-letter code: MEAIKKKMQAMKLEKDNAVDRAETAEQQSREAALRAEKAEEEVRSLQKKIQQIENELDQVQEQLSQANSKLEEKDKALQAAEAEVAAHNRRIQLLEEDLERSEERLKIATQKLEEASQAADESERMRKMLEHRSITDEERMDGLEGQLKEARTMAEDADRKYDEVARKLAMVEADLERAEERAETGETKIVELEEELRVVGNNLKSLEVSEEKALQKEETYEMQIRQMTNRLQEAEARAEFAERSVQKLQKEVDRLEDELVQEKEKYKAISDELDQTFSELTGY.

Residues 1–38 (MEAIKKKMQAMKLEKDNAVDRAETAEQQSREAALRAEK) are disordered. Positions 1–284 (MEAIKKKMQA…DQTFSELTGY (284 aa)) form a coiled coil. Over residues 12–38 (KLEKDNAVDRAETAEQQSREAALRAEK) the composition is skewed to basic and acidic residues.

This sequence belongs to the tropomyosin family. In terms of assembly, homodimer.

Its function is as follows. Tropomyosin, in association with the troponin complex, plays a central role in the calcium dependent regulation of muscle contraction. The chain is Tropomyosin from Rhipicephalus microplus (Cattle tick).